The following is a 278-amino-acid chain: DNA-directed RNA polymerase subunit alpha (278 aa).

It belongs to the RNA polymerase alpha chain family. As to quaternary structure, in plastids the minimal PEP RNA polymerase catalytic core is composed of four subunits: alpha, beta, beta', and beta''. When a (nuclear-encoded) sigma factor is associated with the core the holoenzyme is formed, which can initiate transcription.

The protein resides in the plastid. It localises to the chloroplast. The enzyme catalyses RNA(n) + a ribonucleoside 5'-triphosphate = RNA(n+1) + diphosphate. In terms of biological role, DNA-dependent RNA polymerase catalyzes the transcription of DNA into RNA using the four ribonucleoside triphosphates as substrates. This is DNA-directed RNA polymerase subunit alpha (rpoA) from Chlorella vulgaris (Green alga).